The primary structure comprises 540 residues: Zinc transporter ZIP5 (540 aa).

A signal peptide spans 1–20 (MMGSPVSHLLAGFCVWVVLG). Residues 21-212 (WVGGSVPNLG…PAPPGDLLSA (192 aa)) lie on the Extracellular side of the membrane. A glycan (N-linked (GlcNAc...) asparagine) is linked at asparagine 50. The disordered stretch occupies residues 78-101 (HGPLTGRAASPAADNSTHRPQNPE). Polar residues predominate over residues 90 to 101 (ADNSTHRPQNPE). Asparagine 160 carries an N-linked (GlcNAc...) asparagine glycan. A helical transmembrane segment spans residues 213 to 233 (LLQSALAVLLLSLPSPLSLLL). Topologically, residues 234 to 244 (LRLLGPRLLRP) are cytoplasmic. Residues 245–265 (LLGFLGALAVGTLCGDALLHL) form a helical membrane-spanning segment. Residues 266 to 287 (LPHAQEGRHAGPGGLPEKDLGP) are Extracellular-facing. Residues 288–308 (GLSVLGGLFLLFVLENMLGLL) traverse the membrane as a helical segment. The Cytoplasmic portion of the chain corresponds to 309-444 (RHRGLRPRCC…LLQSGLSFRR (136 aa)). Positions 324–377 (NLETRNLDPENGSGMALQPLQAAPEPGAQGQREKNSQHPPALAPPGHQGHSHGH) are disordered. Position 336 is a phosphoserine (serine 336). Histidine 375 is subject to Pros-methylhistidine. Residues 445–465 (LLLLSLVSGALGLGGAVLGVG) traverse the membrane as a helical segment. At 466-470 (LSLGP) the chain is on the extracellular side. The helical transmembrane segment at 471–491 (VPLTPWVFGVTAGVFLYVALV) threads the bilayer. At 492-508 (DMLPALLRPPEPLPTPH) the chain is on the cytoplasmic side. A helical transmembrane segment spans residues 509–529 (VLLQGLGLLLGGGLMLAITLL). The Extracellular segment spans residues 530–540 (EERLLPVTTEG).

This sequence belongs to the ZIP transporter (TC 2.A.5) family. Homodimer. Post-translationally, methylated at His-375 by METTL9. N-Glycosylated. Expressed in liver, kidney, pancreas, small intestine, colon, spleen, fetal liver and fetal kidney.

The protein localises to the basolateral cell membrane. The catalysed reaction is Zn(2+)(in) = Zn(2+)(out). Functionally, uniporter that transports zinc(2+) into polarized cells of enterocytes, pancreatic acinar and endoderm cells across the basolateral membrane and participates, notably, in zinc excretion from the intestine by the uptake of zinc from the blood into the intestine. The transport mechanism is temperature- and concentration-dependent and saturable. In addition, is also a high affinity copper transporter in vitro. Also may regulate glucose-stimulated insulin secretion (GSIS) in islets primarily through the zinc-activated SIRT1-PPARGC1A axis. Could regulate the BMP/TGF-beta (bone morphogenetic protein/transforming growth factor-beta) signaling pathway and modulates extracellular matrix (ECM) proteins of the sclera. Plays a role in eye development. This is Zinc transporter ZIP5 from Homo sapiens (Human).